A 119-amino-acid chain; its full sequence is Large ribosomal subunit protein uL18 (119 aa).

Belongs to the universal ribosomal protein uL18 family. In terms of assembly, part of the 50S ribosomal subunit; part of the 5S rRNA/L5/L18/L25 subcomplex. Contacts the 5S and 23S rRNAs.

In terms of biological role, this is one of the proteins that bind and probably mediate the attachment of the 5S RNA into the large ribosomal subunit, where it forms part of the central protuberance. The sequence is that of Large ribosomal subunit protein uL18 from Cereibacter sphaeroides (strain ATCC 17029 / ATH 2.4.9) (Rhodobacter sphaeroides).